Consider the following 158-residue polypeptide: Large ribosomal subunit protein uL11 (158 aa).

It belongs to the universal ribosomal protein uL11 family. As to quaternary structure, part of the ribosomal stalk of the 50S ribosomal subunit. Interacts with L10 and the large rRNA to form the base of the stalk. L10 forms an elongated spine to which L12 dimers bind in a sequential fashion forming a multimeric L10(L12)X complex.

Forms part of the ribosomal stalk which helps the ribosome interact with GTP-bound translation factors. This is Large ribosomal subunit protein uL11 from Methanosphaerula palustris (strain ATCC BAA-1556 / DSM 19958 / E1-9c).